The following is a 540-amino-acid chain: Extracellular matrix protein 1 (540 aa).

Residues 1–19 (MGTTARAALVLTYLAVASA) form the signal peptide. 2 disordered regions span residues 41 to 85 (VGYA…EATP) and 120 to 175 (LQHP…PSPD). Polar residues-rich tracts occupy residues 71–85 (GQSQ…EATP) and 146–156 (NAAQHCQQDRS). Repeat copies occupy residues 150–279 (HCQQ…QPHY) and 283–405 (ACPS…YPNY). Residues 150–405 (HCQQDRSQGG…FARRAPYPNY (256 aa)) form a 2 X approximate repeats region. Asn-354 carries an N-linked (GlcNAc...) asparagine glycan. The N-linked (GlcNAc...) (complex) asparagine glycan is linked to Asn-444. The interval 515–540 (ENAKGQGEQGSTGGTNISSTSEPKEE) is disordered. The span at 528–540 (GTNISSTSEPKEE) shows a compositional bias: low complexity. An N-linked (GlcNAc...) asparagine glycan is attached at Asn-530.

In terms of assembly, interacts (via C-terminus) with HSPG2 (via C-terminus). Interacts with EFEMP1/FBLN3 and LAMB3. Interacts with MMP9. In terms of tissue distribution, expressed in breast cancer tissues. Little or no expression observed in normal breast tissues. Expressed in skin; wide expression is observed throughout the dermis with minimal expression in the epidermis.

Its subcellular location is the secreted. It is found in the extracellular space. The protein resides in the extracellular matrix. Involved in endochondral bone formation as negative regulator of bone mineralization. Stimulates the proliferation of endothelial cells and promotes angiogenesis. Inhibits MMP9 proteolytic activity. The chain is Extracellular matrix protein 1 (ECM1) from Homo sapiens (Human).